A 302-amino-acid chain; its full sequence is Catechol 1,2-dioxygenase (302 aa).

Fe cation contacts are provided by Y164, Y198, H222, and H224.

This sequence belongs to the intradiol ring-cleavage dioxygenase family. It depends on Fe(3+) as a cofactor.

It catalyses the reaction catechol + O2 = cis,cis-muconate + 2 H(+). It functions in the pathway aromatic compound metabolism; beta-ketoadipate pathway; 5-oxo-4,5-dihydro-2-furylacetate from catechol: step 1/3. The polypeptide is Catechol 1,2-dioxygenase (pheB) (Pseudomonas sp. (strain EST1001)).